A 595-amino-acid polypeptide reads, in one-letter code: Aspartate--tRNA(Asp/Asn) ligase (595 aa).

Glutamate 175 is an L-aspartate binding site. Residues 199–202 (QQYK) form an aspartate region. Arginine 221 and histidine 454 together coordinate L-aspartate. An ATP-binding site is contributed by 221-223 (RDE). Glutamate 488 serves as a coordination point for ATP. Arginine 495 lines the L-aspartate pocket. 540-543 (GIDR) is an ATP binding site.

This sequence belongs to the class-II aminoacyl-tRNA synthetase family. Type 1 subfamily. Homodimer.

It is found in the cytoplasm. The catalysed reaction is tRNA(Asx) + L-aspartate + ATP = L-aspartyl-tRNA(Asx) + AMP + diphosphate. Its function is as follows. Aspartyl-tRNA synthetase with relaxed tRNA specificity since it is able to aspartylate not only its cognate tRNA(Asp) but also tRNA(Asn). Reaction proceeds in two steps: L-aspartate is first activated by ATP to form Asp-AMP and then transferred to the acceptor end of tRNA(Asp/Asn). In Sinorhizobium fredii (strain NBRC 101917 / NGR234), this protein is Aspartate--tRNA(Asp/Asn) ligase.